A 398-amino-acid chain; its full sequence is Phosphoglycerate kinase (398 aa).

Residues 23-25, Arg-38, 61-64, Arg-122, and Arg-155 each bind substrate; these read DFN and HLGK. Residues Lys-206, Gly-297, Glu-328, and 354-357 contribute to the ATP site; that span reads GGDS.

It belongs to the phosphoglycerate kinase family. In terms of assembly, monomer.

The protein resides in the cytoplasm. The enzyme catalyses (2R)-3-phosphoglycerate + ATP = (2R)-3-phospho-glyceroyl phosphate + ADP. The protein operates within carbohydrate degradation; glycolysis; pyruvate from D-glyceraldehyde 3-phosphate: step 2/5. The polypeptide is Phosphoglycerate kinase (Clostridium kluyveri (strain NBRC 12016)).